The sequence spans 141 residues: Large-conductance mechanosensitive channel (141 aa).

Transmembrane regions (helical) follow at residues 21–41 (VGVI…GDLI) and 85–105 (GSFL…FMMV).

This sequence belongs to the MscL family. In terms of assembly, homopentamer.

The protein localises to the cell inner membrane. Its function is as follows. Channel that opens in response to stretch forces in the membrane lipid bilayer. May participate in the regulation of osmotic pressure changes within the cell. The protein is Large-conductance mechanosensitive channel of Dechloromonas aromatica (strain RCB).